The following is a 65-amino-acid chain: DNA gyrase inhibitor YacG (65 aa).

Zn(2+) is bound by residues Cys9, Cys12, Cys28, and Cys32. A disordered region spans residues 44 to 65; it reads EKRIPSSSDLSESDDWSEEPKQ. Over residues 54–65 the composition is skewed to acidic residues; it reads SESDDWSEEPKQ.

This sequence belongs to the DNA gyrase inhibitor YacG family. Interacts with GyrB. Requires Zn(2+) as cofactor.

In terms of biological role, inhibits all the catalytic activities of DNA gyrase by preventing its interaction with DNA. Acts by binding directly to the C-terminal domain of GyrB, which probably disrupts DNA binding by the gyrase. This is DNA gyrase inhibitor YacG from Escherichia coli O6:H1 (strain CFT073 / ATCC 700928 / UPEC).